Reading from the N-terminus, the 276-residue chain is Large ribosomal subunit protein uL2 (276 aa).

Residues 212-276 (NRHRGIRPQT…KLIISRKKHK (65 aa)) are disordered. Basic residues predominate over residues 257–276 (YKTRKKKASDKLIISRKKHK).

The protein belongs to the universal ribosomal protein uL2 family. Part of the 50S ribosomal subunit. Forms a bridge to the 30S subunit in the 70S ribosome.

Functionally, one of the primary rRNA binding proteins. Required for association of the 30S and 50S subunits to form the 70S ribosome, for tRNA binding and peptide bond formation. It has been suggested to have peptidyltransferase activity; this is somewhat controversial. Makes several contacts with the 16S rRNA in the 70S ribosome. In Helicobacter pylori (strain P12), this protein is Large ribosomal subunit protein uL2.